A 570-amino-acid polypeptide reads, in one-letter code: Sulfite reductase [NADPH] hemoprotein beta-component (570 aa).

Residues cysteine 434, cysteine 440, cysteine 479, and cysteine 483 each coordinate [4Fe-4S] cluster. Siroheme is bound at residue cysteine 483.

It belongs to the nitrite and sulfite reductase 4Fe-4S domain family. Alpha(8)-beta(8). The alpha component is a flavoprotein, the beta component is a hemoprotein. The cofactor is siroheme. [4Fe-4S] cluster is required as a cofactor.

It catalyses the reaction hydrogen sulfide + 3 NADP(+) + 3 H2O = sulfite + 3 NADPH + 4 H(+). The protein operates within sulfur metabolism; hydrogen sulfide biosynthesis; hydrogen sulfide from sulfite (NADPH route): step 1/1. In terms of biological role, component of the sulfite reductase complex that catalyzes the 6-electron reduction of sulfite to sulfide. This is one of several activities required for the biosynthesis of L-cysteine from sulfate. The protein is Sulfite reductase [NADPH] hemoprotein beta-component of Escherichia coli O1:K1 / APEC.